Reading from the N-terminus, the 443-residue chain is tRNA(Ile2) 2-agmatinylcytidine synthetase TiaS (443 aa).

This sequence belongs to the TiaS family.

Its subcellular location is the cytoplasm. The enzyme catalyses cytidine(34) in tRNA(Ile2) + agmatine + ATP + H2O = 2-agmatinylcytidine(34) in tRNA(Ile2) + AMP + 2 phosphate + 2 H(+). Functionally, ATP-dependent agmatine transferase that catalyzes the formation of 2-agmatinylcytidine (agm2C) at the wobble position (C34) of tRNA(Ile2), converting the codon specificity from AUG to AUA. This chain is tRNA(Ile2) 2-agmatinylcytidine synthetase TiaS, found in Saccharolobus islandicus (strain L.S.2.15 / Lassen #1) (Sulfolobus islandicus).